We begin with the raw amino-acid sequence, 849 residues long: Putative respiratory burst oxidase homolog protein G (849 aa).

A compositionally biased stretch (basic and acidic residues) spans 1–17; sequence MQRVSFEVKDTEAEKSS. Residues 1–53 form a disordered region; it reads MQRVSFEVKDTEAEKSSSEILSGSLPSTYRNPAMENVGNAVDDGSSVKNNPKL. Over 1–303 the chain is Cytoplasmic; that stretch reads MQRVSFEVKD…RFFVLDSWQR (303 aa). The segment covering 18-27 has biased composition (low complexity); that stretch reads SEILSGSLPS. EF-hand-like stretches follow at residues 118 to 128 and 153 to 164; these read TANTDGLLLRS and SHLKGDVITETE. EF-hand domains follow at residues 176–211 and 220–255; these read SFDS…SSSA and KADE…AETK. D189, D191, D193, R195, and E200 together coordinate Ca(2+). Residue S270 is modified to Phosphoserine. The chain crosses the membrane as a helical span at residues 304–324; sequence VWVIALWLTIMAILFAYKYIQ. Over 325–392 the chain is Extracellular; that stretch reads YKNRAVYEVL…LNFHKVIAVG (68 aa). Residues 342–502 enclose the Ferric oxidoreductase domain; the sequence is KGAAETLKLN…LFVIVYILLV (161 aa). Residues 393-409 traverse the membrane as a helical segment; that stretch reads IAIGVAIHSVSHLACDF. Residues 410–444 are Cytoplasmic-facing; that stretch reads PLLIAATPAEYMPLGKFFGEEQPKRYLHFVKSTEG. The chain crosses the membrane as a helical span at residues 445-465; sequence ITGLVMVFLMVIAFTLAMPWF. Residues 466-489 are Extracellular-facing; sequence RRGKLEKKLPGPLKKLASFNAFWY. A helical transmembrane segment spans residues 490-510; that stretch reads THHLFVIVYILLVLHGYYIYL. Residues 511–518 lie on the Cytoplasmic side of the membrane; that stretch reads NKEWYKKT. Residues 519-536 form a helical membrane-spanning segment; it reads TWMYLAVPVALYAYERLI. Residues 537–659 are Extracellular-facing; the sequence is RAFRSSIRTV…PYGAPAQDYK (123 aa). Residues 541–657 form the FAD-binding FR-type domain; sequence SSIRTVKVLK…DGPYGAPAQD (117 aa). Residues 660–680 traverse the membrane as a helical segment; the sequence is KYEVVLLIGLGIGATPMISII. The Cytoplasmic segment spans residues 681–849; that stretch reads KDIINNTETK…TRFSFHKENF (169 aa).

It belongs to the RBOH (TC 5.B.1.3) family. In terms of assembly, monomer and homodimer.

The protein resides in the membrane. Functionally, calcium-dependent NADPH oxidase that generates superoxide. The chain is Putative respiratory burst oxidase homolog protein G (RBOHG) from Arabidopsis thaliana (Mouse-ear cress).